A 336-amino-acid polypeptide reads, in one-letter code: MLNMVQSNPKGVEKTASKSEQDAWTLASARLLYDLPFNDLLFEAQNVHRANFDPNRVQLSKLLNIKTGGCPEDCGYCSQSAHHASGLKASKLMSLDTVLEEAQKAKDSGATRYCMGAAWRSPKPRDEPAIAEMVKQVKALGLETCMTLGMLSPDQAQTFAEAGLDYYNHNIDTSERFYPQVITTRSFDDRLETLAHVREAGIKVCSGGILGLGETEDDRIDMLVTLANLPTPPESVPINMLIPMPGSRLEKASPVDPIAFVRIIALARLMMPQSHVRLTAGRNSMSDEMQALCFFAGANSIFIGDTLLTAANPGEDRDTSLMRRLGLTADTLDNHA.

The 228-residue stretch at 55-282 folds into the Radical SAM core domain; it reads NRVQLSKLLN…QSHVRLTAGR (228 aa). [4Fe-4S] cluster-binding residues include Cys70, Cys74, and Cys77. Positions 114, 145, 205, and 277 each coordinate [2Fe-2S] cluster.

The protein belongs to the radical SAM superfamily. Biotin synthase family. Homodimer. [4Fe-4S] cluster is required as a cofactor. Requires [2Fe-2S] cluster as cofactor.

The enzyme catalyses (4R,5S)-dethiobiotin + (sulfur carrier)-SH + 2 reduced [2Fe-2S]-[ferredoxin] + 2 S-adenosyl-L-methionine = (sulfur carrier)-H + biotin + 2 5'-deoxyadenosine + 2 L-methionine + 2 oxidized [2Fe-2S]-[ferredoxin]. It participates in cofactor biosynthesis; biotin biosynthesis; biotin from 7,8-diaminononanoate: step 2/2. Functionally, catalyzes the conversion of dethiobiotin (DTB) to biotin by the insertion of a sulfur atom into dethiobiotin via a radical-based mechanism. This is Biotin synthase from Brucella anthropi (strain ATCC 49188 / DSM 6882 / CCUG 24695 / JCM 21032 / LMG 3331 / NBRC 15819 / NCTC 12168 / Alc 37) (Ochrobactrum anthropi).